We begin with the raw amino-acid sequence, 69 residues long: MKKGIHPELKLITVKCTCGAEHKFWTMKEDIKIDLCSNCHPFYKGDTGSLIVDTEGRVQKFRNKYGDNY.

The Zn(2+) site is built by Cys16, Cys18, Cys36, and Cys39.

The protein belongs to the bacterial ribosomal protein bL31 family. Type A subfamily. Part of the 50S ribosomal subunit. The cofactor is Zn(2+).

Binds the 23S rRNA. The protein is Large ribosomal subunit protein bL31 of Kosmotoga olearia (strain ATCC BAA-1733 / DSM 21960 / TBF 19.5.1).